The sequence spans 274 residues: Putative pyruvate, phosphate dikinase regulatory protein (274 aa).

Residue 153–160 coordinates ADP; the sequence is GISRTSKT.

This sequence belongs to the pyruvate, phosphate/water dikinase regulatory protein family. PDRP subfamily.

It carries out the reaction N(tele)-phospho-L-histidyl/L-threonyl-[pyruvate, phosphate dikinase] + ADP = N(tele)-phospho-L-histidyl/O-phospho-L-threonyl-[pyruvate, phosphate dikinase] + AMP + H(+). The catalysed reaction is N(tele)-phospho-L-histidyl/O-phospho-L-threonyl-[pyruvate, phosphate dikinase] + phosphate + H(+) = N(tele)-phospho-L-histidyl/L-threonyl-[pyruvate, phosphate dikinase] + diphosphate. Functionally, bifunctional serine/threonine kinase and phosphorylase involved in the regulation of the pyruvate, phosphate dikinase (PPDK) by catalyzing its phosphorylation/dephosphorylation. The polypeptide is Putative pyruvate, phosphate dikinase regulatory protein (Bartonella tribocorum (strain CIP 105476 / IBS 506)).